The sequence spans 464 residues: F-box/WD repeat-containing protein 12 (464 aa).

The region spanning Met1–Leu45 is the F-box domain. WD repeat units lie at residues Tyr89–Asp132, Gly136–Asn174, Arg178–Thr217, Arg222–Glu263, Glu270–Asp315, Lys320–Ser367, Gly370–Glu407, and Arg416–Ser461.

As to quaternary structure, interacts with SKP1. Interacts with CUL1. Interacts with IL22RA1. As to expression, ubiquitously expressed.

The protein operates within protein modification; protein ubiquitination. Its function is as follows. Substrate-recognition component of the SCF (SKP1-CUL1-F-box protein)-type E3 ubiquitin ligase complex. Promotes degradation of interleukin-22 receptor subunit IL22RA1 in resting and IL22-stimulated conditions by facilitating its ubiquitination. Functions as a cell growth suppressor. In Homo sapiens (Human), this protein is F-box/WD repeat-containing protein 12 (FBXW12).